The chain runs to 186 residues: Probable GPI-anchored cupredoxin ARB_05732-1 (186 aa).

Positions 1–18 are cleaved as a signal peptide; it reads MVNMNILTTVALAGLAAA. His-55 is a binding site for Cu cation. Residues Cys-66 and Cys-104 are joined by a disulfide bond. Asn-87 is a glycosylation site (N-linked (GlcNAc...) asparagine). Residues Cys-98 and His-103 each coordinate Cu cation. Residues 130–160 are disordered; that stretch reads GAGNGQAPSRVNNGSSGSGTPTSGGAPAATS. The N-linked (GlcNAc...) asparagine glycan is linked to Asn-142. A compositionally biased stretch (low complexity) spans 143-160; it reads GSSGSGTPTSGGAPAATS. Gly-153 is lipidated: GPI-anchor amidated glycine. Residues 154–186 constitute a propeptide, removed in mature form; sequence GAPAATSPNAASSLTFSGAAALVAMGGAWIGLL.

It belongs to the multicopper oxidase family. Requires Cu cation as cofactor.

The protein localises to the cell membrane. It localises to the secreted. Probable electron transfer copper protein that serves as a direct electron donor. The protein is Probable GPI-anchored cupredoxin ARB_05732-1 of Arthroderma benhamiae (strain ATCC MYA-4681 / CBS 112371) (Trichophyton mentagrophytes).